A 39-amino-acid chain; its full sequence is Gas vesicle protein C (39 aa).

The protein belongs to the gas vesicle GvpC family.

Its subcellular location is the gas vesicle. Functionally, confers stability, involved in shaping gas vesicles, hollow, gas filled proteinaceous nanostructures. During planktonic growth they allow positioning of the organism at a favorable depth for light or nutrient acquisition. The polypeptide is Gas vesicle protein C (Spirulina sp. (strain CCAP 1475/10)).